The chain runs to 25 residues: Neuromedin-U-25 (25 aa).

An Asparagine amide modification is found at asparagine 25.

This sequence belongs to the NmU family.

The protein resides in the secreted. In terms of biological role, stimulates uterine smooth muscle contraction and causes selective vasoconstriction. This Gallus gallus (Chicken) protein is Neuromedin-U-25 (NMU).